The following is a 111-amino-acid chain: Integration host factor subunit alpha (111 aa).

The protein belongs to the bacterial histone-like protein family. Heterodimer of an alpha and a beta chain.

Its function is as follows. This protein is one of the two subunits of integration host factor, a specific DNA-binding protein that functions in genetic recombination as well as in transcriptional and translational control. The polypeptide is Integration host factor subunit alpha (Chelativorans sp. (strain BNC1)).